Reading from the N-terminus, the 64-residue chain is MPKMKTNRGAAKRFKLKKNAIKRGSAFKNHILTKKSHQRKANLNAPKYVHSTNVDSVKSLLCMA.

It belongs to the bacterial ribosomal protein bL35 family.

The protein is Large ribosomal subunit protein bL35 of Helicobacter hepaticus (strain ATCC 51449 / 3B1).